Consider the following 338-residue polypeptide: Penicillin V acylase (338 aa).

A propeptide spans 1–3 (removed in mature form); it reads MLG. The active-site Nucleophile is Cys-4.

It belongs to the peptidase C59 family. Homotetramer. In terms of processing, expressed as an inactive precursor that is cleaved autocatalytically at Gly-3/Cys-4 to generate an active enzyme. Processing exposes a catalytic N-terminal nucleophile residue with a free alpha amino group.

It carries out the reaction a penicillin + H2O = 6-aminopenicillanate + a carboxylate. Its activity is regulated as follows. Hydrolase activity is rapidly inhibited by lysine modifying reagents. Its function is as follows. Catalyzes the hydrolysis of penicillin V to 6-aminopenicillanate (6-APA). Exhibits high specificity for penicillin V. Penicillin G and other related compounds are hydrolyzed at less than 10% of the rate of penicillin V. Among the cephalosporins, cephalosporin C is resistant to cleavage, whereas cephalosporin G is cleaved at about 1% of the rate of cleavage of penicillin V. The sequence is that of Penicillin V acylase from Lysinibacillus sphaericus (Bacillus sphaericus).